Consider the following 351-residue polypeptide: UDP-3-O-acylglucosamine N-acyltransferase (351 aa).

Catalysis depends on His-257, which acts as the Proton acceptor.

This sequence belongs to the transferase hexapeptide repeat family. LpxD subfamily. As to quaternary structure, homotrimer.

It carries out the reaction a UDP-3-O-[(3R)-3-hydroxyacyl]-alpha-D-glucosamine + a (3R)-hydroxyacyl-[ACP] = a UDP-2-N,3-O-bis[(3R)-3-hydroxyacyl]-alpha-D-glucosamine + holo-[ACP] + H(+). The protein operates within bacterial outer membrane biogenesis; LPS lipid A biosynthesis. Catalyzes the N-acylation of UDP-3-O-acylglucosamine using 3-hydroxyacyl-ACP as the acyl donor. Is involved in the biosynthesis of lipid A, a phosphorylated glycolipid that anchors the lipopolysaccharide to the outer membrane of the cell. The protein is UDP-3-O-acylglucosamine N-acyltransferase of Methylorubrum populi (strain ATCC BAA-705 / NCIMB 13946 / BJ001) (Methylobacterium populi).